Reading from the N-terminus, the 179-residue chain is Large ribosomal subunit protein uL5 (179 aa).

The protein belongs to the universal ribosomal protein uL5 family. Part of the 50S ribosomal subunit; part of the 5S rRNA/L5/L18/L25 subcomplex. Contacts the 5S rRNA and the P site tRNA. Forms a bridge to the 30S subunit in the 70S ribosome.

This is one of the proteins that bind and probably mediate the attachment of the 5S RNA into the large ribosomal subunit, where it forms part of the central protuberance. In the 70S ribosome it contacts protein S13 of the 30S subunit (bridge B1b), connecting the 2 subunits; this bridge is implicated in subunit movement. Contacts the P site tRNA; the 5S rRNA and some of its associated proteins might help stabilize positioning of ribosome-bound tRNAs. The chain is Large ribosomal subunit protein uL5 from Prochlorococcus marinus (strain MIT 9303).